A 234-amino-acid chain; its full sequence is GTP:AMP phosphotransferase, mitochondrial (234 aa).

Position 24–29 (24–29 (GSGKGT)) interacts with GTP. An NMP region spans residues 45 to 74 (SSGDILRQEIKSESTLGREATTYIAQGKLL). AMP contacts are provided by residues Ser-46, Arg-51, 72 to 74 (KLL), 103 to 106 (GFPR), and Gln-110. Residues 144 to 181 (NRYVHVPSGRVYNLQYNPPKVPGLDDITGEPLTKRLDD) form an LID region. GTP contacts are provided by residues Arg-145 and 154–155 (VY). The AMP site is built by Arg-178 and Arg-189. Ser-218 provides a ligand contact to GTP.

This sequence belongs to the adenylate kinase family. AK3 subfamily. As to quaternary structure, monomer.

Its subcellular location is the mitochondrion matrix. It carries out the reaction a ribonucleoside 5'-triphosphate + AMP = a ribonucleoside 5'-diphosphate + ADP. In terms of biological role, involved in maintaining the homeostasis of cellular nucleotides by catalyzing the interconversion of nucleoside phosphates. Has GTP:AMP phosphotransferase and ITP:AMP phosphotransferase activities. Does not accept ATP as phosphate donor. This chain is GTP:AMP phosphotransferase, mitochondrial, found in Saccharomyces cerevisiae (Baker's yeast).